We begin with the raw amino-acid sequence, 471 residues long: Putative ETHYLENE INSENSITIVE 3-like 4 protein (471 aa).

Residues 280–316 (DLKISEDQDDQESSGSKRKSESMEPSKSVYTCQNSSC) are disordered. The segment covering 304–316 (PSKSVYTCQNSSC) has biased composition (polar residues).

This sequence belongs to the EIN3 family.

The protein resides in the nucleus. Its function is as follows. Putative transcription factor that may be involved in the ethylene response pathway. This Arabidopsis thaliana (Mouse-ear cress) protein is Putative ETHYLENE INSENSITIVE 3-like 4 protein (EIL4).